We begin with the raw amino-acid sequence, 173 residues long: ATP-dependent protease subunit HslV (173 aa).

Threonine 2 is an active-site residue. Positions 158, 161, and 164 each coordinate Na(+).

Belongs to the peptidase T1B family. HslV subfamily. As to quaternary structure, a double ring-shaped homohexamer of HslV is capped on each side by a ring-shaped HslU homohexamer. The assembly of the HslU/HslV complex is dependent on binding of ATP.

The protein resides in the cytoplasm. It catalyses the reaction ATP-dependent cleavage of peptide bonds with broad specificity.. Allosterically activated by HslU binding. Protease subunit of a proteasome-like degradation complex believed to be a general protein degrading machinery. This is ATP-dependent protease subunit HslV from Mannheimia haemolytica (Pasteurella haemolytica).